A 453-amino-acid chain; its full sequence is tRNA modification GTPase MnmE (453 aa).

Residues arginine 28, glutamate 86, and lysine 125 each coordinate (6S)-5-formyl-5,6,7,8-tetrahydrofolate. A TrmE-type G domain is found at 221–375; it reads GIKIAIVGEP…LIKYLEETSL (155 aa). Position 231 (asparagine 231) interacts with K(+). Residues 231 to 236, 250 to 256, and 276 to 279 each bind GTP; these read NAGKSS, TNIPGTT, and DTAG. Serine 235 contributes to the Mg(2+) binding site. Positions 250, 252, and 255 each coordinate K(+). Threonine 256 serves as a coordination point for Mg(2+). Lysine 453 lines the (6S)-5-formyl-5,6,7,8-tetrahydrofolate pocket.

Belongs to the TRAFAC class TrmE-Era-EngA-EngB-Septin-like GTPase superfamily. TrmE GTPase family. In terms of assembly, homodimer. Heterotetramer of two MnmE and two MnmG subunits. It depends on K(+) as a cofactor.

It localises to the cytoplasm. Exhibits a very high intrinsic GTPase hydrolysis rate. Involved in the addition of a carboxymethylaminomethyl (cmnm) group at the wobble position (U34) of certain tRNAs, forming tRNA-cmnm(5)s(2)U34. The chain is tRNA modification GTPase MnmE from Mycoplasmoides gallisepticum (strain R(low / passage 15 / clone 2)) (Mycoplasma gallisepticum).